Reading from the N-terminus, the 847-residue chain is Leucine--tRNA ligase (847 aa).

A 'HIGH' region motif is present at residues 43–53 (PYPSGKLHMGH). The 'KMSKS' region motif lies at 607-611 (KMSKS). Lysine 610 contributes to the ATP binding site.

It belongs to the class-I aminoacyl-tRNA synthetase family.

The protein resides in the cytoplasm. It carries out the reaction tRNA(Leu) + L-leucine + ATP = L-leucyl-tRNA(Leu) + AMP + diphosphate. The chain is Leucine--tRNA ligase from Buchnera aphidicola subsp. Cinara cedri (strain Cc).